A 291-amino-acid chain; its full sequence is S-methyl-5'-thioadenosine phosphorylase (291 aa).

Phosphate-binding positions include Ser12, 54–55 (RH), and 87–88 (SA). Met185 lines the substrate pocket. Residue Thr186 coordinates phosphate. Position 209-211 (209-211 (DFD)) interacts with substrate.

It belongs to the PNP/MTAP phosphorylase family. MTAP subfamily. Homohexamer. Dimer of a homotrimer.

It carries out the reaction S-methyl-5'-thioadenosine + phosphate = 5-(methylsulfanyl)-alpha-D-ribose 1-phosphate + adenine. Its pathway is amino-acid biosynthesis; L-methionine biosynthesis via salvage pathway; S-methyl-5-thio-alpha-D-ribose 1-phosphate from S-methyl-5'-thioadenosine (phosphorylase route): step 1/1. Functionally, catalyzes the reversible phosphorylation of S-methyl-5'-thioadenosine (MTA) to adenine and 5-methylthioribose-1-phosphate. Involved in the breakdown of MTA, a major by-product of polyamine biosynthesis. Responsible for the first step in the methionine salvage pathway after MTA has been generated from S-adenosylmethionine. Has broad substrate specificity with 6-aminopurine nucleosides as preferred substrates. This chain is S-methyl-5'-thioadenosine phosphorylase, found in Bradyrhizobium diazoefficiens (strain JCM 10833 / BCRC 13528 / IAM 13628 / NBRC 14792 / USDA 110).